Reading from the N-terminus, the 854-residue chain is Putative COX1/OXI3 intron 2 protein (854 aa).

A Reverse transcriptase domain is found at L329–V613.

It is found in the mitochondrion. The sequence is that of Putative COX1/OXI3 intron 2 protein (AI2) from Saccharomyces cerevisiae (strain ATCC 204508 / S288c) (Baker's yeast).